The following is a 167-amino-acid chain: Troponin C-akin-1 protein (167 aa).

17–20 (YGAL) lines the substrate pocket. The Proton acceptor role is filled by Glu92.

This sequence belongs to the gamma-glutamylcyclotransferase family. As to expression, in embryos, expression is seen in heart cells of the dorsal vessel and hindgut visceral mesoderm.

Functionally, putative gamma-glutamylcyclotransferase. The polypeptide is Troponin C-akin-1 protein (Tina-1) (Drosophila melanogaster (Fruit fly)).